We begin with the raw amino-acid sequence, 116 residues long: Non-specific lipid-transfer protein (116 aa).

The N-terminal stretch at 1 to 25 is a signal peptide; sequence MAKMAMMVLCAGVTCMVVGAPYTEA. Cystine bridges form between C28/C75, C38/C52, C53/C98, and C73/C112.

The protein belongs to the plant LTP family.

Plant non-specific lipid-transfer proteins transfer phospholipids as well as galactolipids across membranes. May play a role in wax or cutin deposition in the cell walls of expanding epidermal cells and certain secretory tissues. The chain is Non-specific lipid-transfer protein from Helianthus annuus (Common sunflower).